Reading from the N-terminus, the 139-residue chain is Ribulose bisphosphate carboxylase small subunit, chromosomal (139 aa).

The protein belongs to the RuBisCO small chain family. Heterohexadecamer of 8 large and 8 small subunits.

In terms of biological role, ruBisCO catalyzes two reactions: the carboxylation of D-ribulose 1,5-bisphosphate, the primary event in carbon dioxide fixation, as well as the oxidative fragmentation of the pentose substrate. Both reactions occur simultaneously and in competition at the same active site. Although the small subunit is not catalytic it is essential for maximal activity. The polypeptide is Ribulose bisphosphate carboxylase small subunit, chromosomal (Cupriavidus necator (Alcaligenes eutrophus)).